The chain runs to 492 residues: 6-phosphogluconate dehydrogenase, decarboxylating (492 aa).

NADP(+)-binding positions include 13–18, 36–38, 78–80, and Asn-106; these read GLAVMG, NRT, and VKA. Asn-106 serves as a coordination point for substrate. Position 107 is a phosphoserine (Ser-107). 132–134 lines the substrate pocket; it reads SGG. Lys-187 functions as the Proton acceptor in the catalytic mechanism. 190 to 191 contributes to the substrate binding site; it reads HN. Glu-194 serves as the catalytic Proton donor. Position 195 (Tyr-195) interacts with substrate. Phosphoserine is present on Ser-215. Substrate-binding residues include Lys-264, Arg-291, Arg-449, and His-455.

The protein belongs to the 6-phosphogluconate dehydrogenase family. In terms of assembly, homodimer.

It catalyses the reaction 6-phospho-D-gluconate + NADP(+) = D-ribulose 5-phosphate + CO2 + NADPH. It functions in the pathway carbohydrate degradation; pentose phosphate pathway; D-ribulose 5-phosphate from D-glucose 6-phosphate (oxidative stage): step 3/3. Its function is as follows. Catalyzes the oxidative decarboxylation of 6-phosphogluconate to ribulose 5-phosphate and CO(2), with concomitant reduction of NADP to NADPH. In Schizosaccharomyces pombe (strain 972 / ATCC 24843) (Fission yeast), this protein is 6-phosphogluconate dehydrogenase, decarboxylating.